A 275-amino-acid chain; its full sequence is Rhamnulose-1-phosphate aldolase (275 aa).

Glu117 is an active-site residue. Residues His141, His143, and His212 each coordinate Zn(2+).

This sequence belongs to the aldolase class II family. RhaD subfamily. As to quaternary structure, homotetramer. Requires Zn(2+) as cofactor.

It is found in the cytoplasm. It catalyses the reaction L-rhamnulose 1-phosphate = (S)-lactaldehyde + dihydroxyacetone phosphate. It participates in carbohydrate degradation; L-rhamnose degradation; glycerone phosphate from L-rhamnose: step 3/3. In terms of biological role, catalyzes the reversible cleavage of L-rhamnulose-1-phosphate to dihydroxyacetone phosphate (DHAP) and L-lactaldehyde. The protein is Rhamnulose-1-phosphate aldolase of Salmonella paratyphi B (strain ATCC BAA-1250 / SPB7).